A 345-amino-acid polypeptide reads, in one-letter code: Phosphate acyltransferase (345 aa).

The protein belongs to the PlsX family. In terms of assembly, homodimer. Probably interacts with PlsY.

The protein localises to the cytoplasm. The catalysed reaction is a fatty acyl-[ACP] + phosphate = an acyl phosphate + holo-[ACP]. The protein operates within lipid metabolism; phospholipid metabolism. Functionally, catalyzes the reversible formation of acyl-phosphate (acyl-PO(4)) from acyl-[acyl-carrier-protein] (acyl-ACP). This enzyme utilizes acyl-ACP as fatty acyl donor, but not acyl-CoA. The sequence is that of Phosphate acyltransferase from Levilactobacillus brevis (strain ATCC 367 / BCRC 12310 / CIP 105137 / JCM 1170 / LMG 11437 / NCIMB 947 / NCTC 947) (Lactobacillus brevis).